The sequence spans 357 residues: Probable leucine aminopeptidase ARB_00576 (357 aa).

Residues 1-15 (MKVLAALALSALAMA) form the signal peptide. N-linked (GlcNAc...) asparagine glycosylation is present at N76. Residues H167 and D185 each contribute to the Zn(2+) site. Residues 169–188 (DSINGNNPQGEAPGADDNGS) form a disordered region. A glycan (N-linked (GlcNAc...) asparagine) is linked at N186. Positions 224 and 251 each coordinate Zn(2+). N-linked (GlcNAc...) asparagine glycosylation occurs at N269. A disulfide bridge connects residues C291 and C295. Residue H324 coordinates Zn(2+).

It belongs to the peptidase M28 family. M28E subfamily. In terms of assembly, monomer. Zn(2+) is required as a cofactor.

Its subcellular location is the secreted. Probable extracellular aminopeptidase which contributes to pathogenicity. This Arthroderma benhamiae (strain ATCC MYA-4681 / CBS 112371) (Trichophyton mentagrophytes) protein is Probable leucine aminopeptidase ARB_00576.